The following is a 93-amino-acid chain: Protein YzgL (93 aa).

In Escherichia coli (strain K12), this protein is Protein YzgL (yzgL).